Consider the following 318-residue polypeptide: Porphobilinogen deaminase (318 aa).

Cys248 bears the S-(dipyrrolylmethanemethyl)cysteine mark.

This sequence belongs to the HMBS family. In terms of assembly, monomer. Dipyrromethane serves as cofactor.

It carries out the reaction 4 porphobilinogen + H2O = hydroxymethylbilane + 4 NH4(+). The protein operates within porphyrin-containing compound metabolism; protoporphyrin-IX biosynthesis; coproporphyrinogen-III from 5-aminolevulinate: step 2/4. In terms of biological role, tetrapolymerization of the monopyrrole PBG into the hydroxymethylbilane pre-uroporphyrinogen in several discrete steps. This chain is Porphobilinogen deaminase, found in Caulobacter sp. (strain K31).